The primary structure comprises 382 residues: Apolipoprotein A-IV (382 aa).

The N-terminal stretch at 1–20 (MFLKAVVLTLSLVAVTGAQA) is a signal peptide. 13 tandem repeats follow at residues 33–54 (DYFS…KSEL), 60–81 (ALFQ…KKLV), 82–103 (PFAT…EEIR), 115–136 (PHAD…QRLG), 137–158 (PYAE…NQLT), 159–180 (AHAQ…ASLT), 181–202 (PYAD…GHLT), 203–224 (PYAD…RSLA), 225–246 (PYAQ…FQMK), 247–268 (KNAE…QKLV), 269–286 (PVAE…EELQ), 287–308 (KSLA…RNVG), and 309–330 (PYGE…QKLG). Residues 33–330 (DYFSQLSNNA…QVEELRQKLG (298 aa)) form a 13 X 22 AA approximate tandem repeats region.

Belongs to the apolipoprotein A1/A4/E family. Homodimer. Post-translationally, phosphorylation sites are present in the extracellular medium.

Its subcellular location is the secreted. In terms of biological role, may have a role in chylomicrons and VLDL secretion and catabolism. Required for efficient activation of lipoprotein lipase by ApoC-II; potent activator of LCAT. Apoa-IV is a major component of HDL and chylomicrons. In Neomonachus schauinslandi (Hawaiian monk seal), this protein is Apolipoprotein A-IV (APOA4).